The primary structure comprises 855 residues: Potassium transporter 13 (855 aa).

Residues 1–67 (MFHVEEESSG…EMDSDEEDDN (67 aa)) are disordered. At 1–105 (MFHVEEESSG…EIEDTGIGKK (105 aa)) the chain is on the cytoplasmic side. Residues 36–51 (EKDDYEVNEDYDDDGY) are compositionally biased toward acidic residues. A helical membrane pass occupies residues 106 to 126 (LILALQTLGVVFGDIGTSPLY). The Extracellular portion of the chain corresponds to 127–142 (TFTVMFRRSPINDKED). Residues 143 to 163 (IIGALSLVIYTLILIPLVKYV) form a helical membrane-spanning segment. The Cytoplasmic segment spans residues 164-233 (HFVLWANDDG…RLEASMALKK (70 aa)). Residues 234–254 (LLLILVLAGTAMVIADAVVTP) traverse the membrane as a helical segment. Over 255 to 268 (AMSVMSAIGGLKVG) the chain is Extracellular. Residues 269–289 (VGVIEQDQVVVISVSFLVILF) traverse the membrane as a helical segment. The Cytoplasmic portion of the chain corresponds to 290-298 (SVQKYGTSK). Residues 299 to 319 (LGLVLGPALLLWFFCLAGIGI) traverse the membrane as a helical segment. At 320-346 (YNLVKYDSSVFKAFNPAYIYFFFKRNS) the chain is on the extracellular side. A helical membrane pass occupies residues 347-367 (VNAWYALGGCVLCATGSEAMF). At 368–379 (ADLSYFSVHSIQ) the chain is on the cytoplasmic side. Residues 380–400 (LTFILLVLPCLLLGYLGQAAY) traverse the membrane as a helical segment. Residues 401–415 (LSENFSAAGDAFFSS) are Extracellular-facing. The N-linked (GlcNAc...) asparagine glycan is linked to asparagine 404. Residues 416-436 (VPSSLFWPVFLISNVAALIAS) form a helical membrane-spanning segment. Topologically, residues 437 to 467 (RAMTTATFTCIKQSIALGCFPRLKIIHTSKK) are cytoplasmic. A helical transmembrane segment spans residues 468–488 (FIGQIYIPVLNWSLLVVCLIV). Topologically, residues 489 to 503 (VCSTSNIFAIGNAYG) are extracellular. A helical membrane pass occupies residues 504–524 (IAELGIMMTTTILVTLIMLLI). Over 525–528 (WQTN) the chain is Cytoplasmic. A helical membrane pass occupies residues 529-549 (IIVVSMFAIVSLIVELVFFSS). Residues 550-553 (VCSS) lie on the Extracellular side of the membrane. The chain crosses the membrane as a helical span at residues 554–574 (VADGSWIILVFATIMFLIMFV). At 575–855 (WNYGSKLKYE…LMQVGMTYMV (281 aa)) the chain is on the cytoplasmic side. The residue at position 766 (serine 766) is a Phosphoserine.

This sequence belongs to the HAK/KUP transporter (TC 2.A.72.3) family.

It is found in the cell membrane. In terms of biological role, probable potassium transporter. The sequence is that of Potassium transporter 13 (POT13) from Arabidopsis thaliana (Mouse-ear cress).